The following is a 68-amino-acid chain: Putative membrane protein insertion efficiency factor (68 aa).

Belongs to the UPF0161 family.

The protein resides in the cell membrane. Could be involved in insertion of integral membrane proteins into the membrane. The polypeptide is Putative membrane protein insertion efficiency factor (Herpetosiphon aurantiacus (strain ATCC 23779 / DSM 785 / 114-95)).